Consider the following 307-residue polypeptide: Probable thioesterase KK1J (307 aa).

This sequence belongs to the AMT4 thioesterase family.

Its pathway is secondary metabolite biosynthesis. Functionally, probable thioesterase; part of the gene cluster that mediates the biosynthesis of KK-1, a novel cyclic depsipeptide with 10 residues which is a promising active compound with high activity against many plant pathogens, especially Botrytis cinerea. Within the pathway, kk1J is not essential for the biosynthesis of KK-1, but plays a role for efficient production via correction of peptide chain synthesis by kk1B. The nonribosomal peptide synthetase (NRPS) kk1B catalyzes the elongation and cyclization of the decapeptide chain composed of 1 D-lactic acid residue (D-Lac), 1 pipecolic acid residue (Pip), 1 aspartic acid residue (Asp), 1 isoleucine residue (Ile), 1 glycine residue (Gly), 1 tyrosine residue (Tyr) and 4 valine residues (Val). The Asp, Ile and 3 Val residues are N-methylated by the 5 methyltransferase domains from the NRPS (found in modules 3, 5, 6, 7 and 9), whereas the Tyr residue is O-methylated by the cluster encoded O-methyltransferase kk1A. The thioesterase kk1J is likely to be involved in the corrective mechanism of peptide chain synthesis. The D-lactate dehydrogenase kk1H is involved in the synthesis of D-lactic acid from pyruvic acid, which is recognized by the A domain of the first kk1B module. The pyrroline-5-carboxylate reductase kk1I is involved in the synthesis of the L-pipecolic acid residue of KK-1 from delta-1-pyrroline-5-carboxylate (P5C), a metabolic intermediate of lysine. It still is unclear how kk1C and kk1D are involved in the production of KK-1. The sequence is that of Probable thioesterase KK1J from Curvularia clavata.